We begin with the raw amino-acid sequence, 352 residues long: Protein Wnt-2 (352 aa).

Residues 1–23 form the signal peptide; the sequence is MWKIHNKLLIYILWIMEIRLVSS. 11 disulfides stabilise this stretch: C65/C76, C115/C123, C125/C148, C196/C210, C198/C205, C281/C312, C297/C307, C311/C351, C327/C342, C329/C339, and C334/C335. 2 N-linked (GlcNAc...) asparagine glycosylation sites follow: N75 and N119. A lipid anchor (O-palmitoleoyl serine; by PORCN) is attached at S202.

Belongs to the Wnt family. In terms of processing, palmitoleoylated by porcupine. The lipid group functions as a sorting signal, targeting the ligand to polarized vesicles that transport Wnt2 to unique sites at the cell surface. Depalmitoleoylated by notum, leading to inhibit Wnt signaling pathway. In terms of tissue distribution, dynamic expression pattern during embryogenesis. Expression is predominantly segmented, with expression also seen in the limb primordia and presumptive gonads. In embryonic tracheal cells, expression is close to and dorsal to the tracheal placode.

It localises to the secreted. It is found in the extracellular space. Its subcellular location is the extracellular matrix. Binds as a ligand to a family of frizzled seven-transmembrane receptors and acts through a cascade of genes on the nucleus. Segment polarity protein. May function in gonadogenesis and limb development. Wg and Wnt2 have a role in the developing trachea and together are responsible for all dorsal trunk formation. This is Protein Wnt-2 (Wnt2) from Drosophila melanogaster (Fruit fly).